Reading from the N-terminus, the 180-residue chain is Large ribosomal subunit protein uL5 (180 aa).

Belongs to the universal ribosomal protein uL5 family. Part of the 50S ribosomal subunit; part of the 5S rRNA/L5/L18/L25 subcomplex. Contacts the 5S rRNA and the P site tRNA. Forms a bridge to the 30S subunit in the 70S ribosome.

This is one of the proteins that bind and probably mediate the attachment of the 5S RNA into the large ribosomal subunit, where it forms part of the central protuberance. In the 70S ribosome it contacts protein S13 of the 30S subunit (bridge B1b), connecting the 2 subunits; this bridge is implicated in subunit movement. Contacts the P site tRNA; the 5S rRNA and some of its associated proteins might help stabilize positioning of ribosome-bound tRNAs. This chain is Large ribosomal subunit protein uL5, found in Gloeothece citriformis (strain PCC 7424) (Cyanothece sp. (strain PCC 7424)).